Consider the following 59-residue polypeptide: MSLIVVRTHSFILFWFSCCWRVCFIQWIRKYSIPMADMGRRDSASALLDASENKNHLWG.

This sequence belongs to the scoloptoxin-23 family. Post-translationally, contains 1 disulfide bond. In terms of tissue distribution, expressed by the venom gland.

It localises to the secreted. The sequence is that of U-scoloptoxin(23)-Er2a from Ethmostigmus rubripes (Giant centipede).